The sequence spans 406 residues: Biofilm regulatory protein A (406 aa).

The signal sequence occupies residues 1–26 (MKIGKKILIMLVTIFLTSLVALGVYA). Residues 347–397 (SSSASDYSSSGNYSGSSSDYGSSSSYGSNSSSGSSSDYSGQNSYNQGNYQQ) are compositionally biased toward low complexity. Positions 347–406 (SSSASDYSSSGNYSGSSSDYGSSSSYGSNSSSGSSSDYSGQNSYNQGNYQQPAAGTGIGN) are disordered.

It belongs to the LytR/CpsA/Psr (LCP) family.

It is found in the cell envelope. Involved in biofilm formation, cell division, autolysis and the regulation of acid and oxidative stress tolerance. May be associated with systemic virulence in blood. The chain is Biofilm regulatory protein A (brpA) from Streptococcus mutans serotype c (strain ATCC 700610 / UA159).